The chain runs to 109 residues: T cell receptor alpha variable 27 (109 aa).

The signal sequence occupies residues 1–19 (MVLKFSVSILWIQLAWVST). In terms of domain architecture, Ig-like spans 20-109 (QLLEQSPQFL…GDTGLYLCAG (90 aa)). N-linked (GlcNAc...) asparagine glycosylation is found at Asn36 and Asn42. Cys41 and Cys107 are disulfide-bonded.

Alpha-beta TR is a heterodimer composed of an alpha and beta chain; disulfide-linked. The alpha-beta TR is associated with the transmembrane signaling CD3 coreceptor proteins to form the TR-CD3 (TcR or TCR). The assembly of alpha-beta TR heterodimers with CD3 occurs in the endoplasmic reticulum where a single alpha-beta TR heterodimer associates with one CD3D-CD3E heterodimer, one CD3G-CD3E heterodimer and one CD247 homodimer forming a stable octameric structure. CD3D-CD3E and CD3G-CD3E heterodimers preferentially associate with TR alpha and TR beta chains, respectively. The association of the CD247 homodimer is the last step of TcR assembly in the endoplasmic reticulum and is required for transport to the cell surface. As to quaternary structure, (Microbial infection) Interacts with Staphylococcus aureus enterotoxin H/entH.

It is found in the cell membrane. Functionally, v region of the variable domain of T cell receptor (TR) alpha chain that participates in the antigen recognition. Alpha-beta T cell receptors are antigen specific receptors which are essential to the immune response and are present on the cell surface of T lymphocytes. Recognize peptide-major histocompatibility (MH) (pMH) complexes that are displayed by antigen presenting cells (APC), a prerequisite for efficient T cell adaptive immunity against pathogens. Binding of alpha-beta TR to pMH complex initiates TR-CD3 clustering on the cell surface and intracellular activation of LCK that phosphorylates the ITAM motifs of CD3G, CD3D, CD3E and CD247 enabling the recruitment of ZAP70. In turn, ZAP70 phosphorylates LAT, which recruits numerous signaling molecules to form the LAT signalosome. The LAT signalosome propagates signal branching to three major signaling pathways, the calcium, the mitogen-activated protein kinase (MAPK) kinase and the nuclear factor NF-kappa-B (NF-kB) pathways, leading to the mobilization of transcription factors that are critical for gene expression and essential for T cell growth and differentiation. The T cell repertoire is generated in the thymus, by V-(D)-J rearrangement. This repertoire is then shaped by intrathymic selection events to generate a peripheral T cell pool of self-MH restricted, non-autoaggressive T cells. Post-thymic interaction of alpha-beta TR with the pMH complexes shapes TR structural and functional avidity. In Homo sapiens (Human), this protein is T cell receptor alpha variable 27.